The sequence spans 276 residues: Bis(5'-nucleosyl)-tetraphosphatase, symmetrical (276 aa).

Belongs to the Ap4A hydrolase family.

It carries out the reaction P(1),P(4)-bis(5'-adenosyl) tetraphosphate + H2O = 2 ADP + 2 H(+). Hydrolyzes diadenosine 5',5'''-P1,P4-tetraphosphate to yield ADP. This is Bis(5'-nucleosyl)-tetraphosphatase, symmetrical from Psychromonas ingrahamii (strain DSM 17664 / CCUG 51855 / 37).